A 94-amino-acid polypeptide reads, in one-letter code: NADH dehydrogenase [ubiquinone] iron-sulfur protein 3, mitochondrial (94 aa).

Belongs to the complex I 30 kDa subunit family. As to quaternary structure, core subunit of respiratory chain NADH dehydrogenase (Complex I) which is composed of 45 different subunits. Interacts with NDUFAF3. Interacts with RAB5IF. Found in subcomplexes containing subunits NDUFS2, MT-ND1 and NDUFA13.

Its subcellular location is the mitochondrion inner membrane. It catalyses the reaction a ubiquinone + NADH + 5 H(+)(in) = a ubiquinol + NAD(+) + 4 H(+)(out). Functionally, core subunit of the mitochondrial membrane respiratory chain NADH dehydrogenase (Complex I) which catalyzes electron transfer from NADH through the respiratory chain, using ubiquinone as an electron acceptor. Essential for the catalytic activity and assembly of complex I. The chain is NADH dehydrogenase [ubiquinone] iron-sulfur protein 3, mitochondrial from Mesocricetus auratus (Golden hamster).